Reading from the N-terminus, the 630-residue chain is tRNA uridine 5-carboxymethylaminomethyl modification enzyme MnmG (630 aa).

FAD is bound by residues Gly13–Gly18, Val125, and Ser180. Residue Gly273–Phe287 participates in NAD(+) binding. Residue Gln370 participates in FAD binding.

This sequence belongs to the MnmG family. Homodimer. Heterotetramer of two MnmE and two MnmG subunits. Requires FAD as cofactor.

The protein resides in the cytoplasm. Its function is as follows. NAD-binding protein involved in the addition of a carboxymethylaminomethyl (cmnm) group at the wobble position (U34) of certain tRNAs, forming tRNA-cmnm(5)s(2)U34. This is tRNA uridine 5-carboxymethylaminomethyl modification enzyme MnmG from Shewanella woodyi (strain ATCC 51908 / MS32).